A 346-amino-acid chain; its full sequence is tRNA N6-adenosine threonylcarbamoyltransferase (346 aa).

Residues His111 and His115 each coordinate Fe cation. Residues 134–138 (LVSGG), Asp167, Gly180, and Asn279 contribute to the substrate site. Asp307 lines the Fe cation pocket.

This sequence belongs to the KAE1 / TsaD family. Fe(2+) is required as a cofactor.

The protein resides in the cytoplasm. The catalysed reaction is L-threonylcarbamoyladenylate + adenosine(37) in tRNA = N(6)-L-threonylcarbamoyladenosine(37) in tRNA + AMP + H(+). Functionally, required for the formation of a threonylcarbamoyl group on adenosine at position 37 (t(6)A37) in tRNAs that read codons beginning with adenine. Is involved in the transfer of the threonylcarbamoyl moiety of threonylcarbamoyl-AMP (TC-AMP) to the N6 group of A37, together with TsaE and TsaB. TsaD likely plays a direct catalytic role in this reaction. The sequence is that of tRNA N6-adenosine threonylcarbamoyltransferase from Burkholderia cenocepacia (strain ATCC BAA-245 / DSM 16553 / LMG 16656 / NCTC 13227 / J2315 / CF5610) (Burkholderia cepacia (strain J2315)).